We begin with the raw amino-acid sequence, 87 residues long: Small ribosomal subunit protein uS15 (87 aa).

This sequence belongs to the universal ribosomal protein uS15 family. Part of the 30S ribosomal subunit. Forms a bridge to the 50S subunit in the 70S ribosome, contacting the 23S rRNA.

One of the primary rRNA binding proteins, it binds directly to 16S rRNA where it helps nucleate assembly of the platform of the 30S subunit by binding and bridging several RNA helices of the 16S rRNA. In terms of biological role, forms an intersubunit bridge (bridge B4) with the 23S rRNA of the 50S subunit in the ribosome. This chain is Small ribosomal subunit protein uS15, found in Clostridium botulinum (strain Eklund 17B / Type B).